The primary structure comprises 150 residues: HTH-type transcriptional regulator LrpA (150 aa).

In terms of domain architecture, HTH asnC-type spans 5 to 66 (LDDIDRILVR…RINPEAVGHL (62 aa)). The segment at residues 24 to 43 (LSELATRAGLSVSAVQSRVR) is a DNA-binding region (H-T-H motif). L-phenylalanine contacts are provided by Val100, Gly102, and Glu104.

Homohexadecamer in the absence of any added ligand. Homooctamer. Tetramer of dimers. In the presence of phenylalanine, the hexadecamer dissociates into an octamer, which further dissociates partially into lower-order oligomers.

Its activity is regulated as follows. The DNA-binding activity of LrpA is modulated by interaction of LrpA with various effector molecules, including amino acids and vitamins. The DNA binding affinity is decreased by several amino acids, including phenylalanine, tyrosine, tryptophan, histidine, leucine and aspartate. Preferentially binds to aromatic amino acids. Besides amino acids, the binding affinity is also reduced by vitamins, including B1, B3, B6, VC, B7, B9, B12, VA and VK3. In terms of biological role, transcriptional regulator that probably plays an important role in M.tuberculosis persistence. Regulates the expression of several genes, including lat, rsmG, whiB2, lsr2 and Rv2011c. Acts by binding directly to the promoter region of the target genes. The polypeptide is HTH-type transcriptional regulator LrpA (Mycobacterium tuberculosis (strain ATCC 25618 / H37Rv)).